Reading from the N-terminus, the 359-residue chain is Fructose-bisphosphate aldolase (359 aa).

A D-glyceraldehyde 3-phosphate-binding site is contributed by Ser61. The active-site Proton donor is the Asp109. Zn(2+) contacts are provided by His110, Asp144, Glu174, and His226. Gly227 is a binding site for dihydroxyacetone phosphate. His265 lines the Zn(2+) pocket. Residues 266 to 268 and 287 to 290 contribute to the dihydroxyacetone phosphate site; these read GGS and NIDT.

This sequence belongs to the class II fructose-bisphosphate aldolase family. The cofactor is Zn(2+).

The enzyme catalyses beta-D-fructose 1,6-bisphosphate = D-glyceraldehyde 3-phosphate + dihydroxyacetone phosphate. Its pathway is carbohydrate degradation; glycolysis; D-glyceraldehyde 3-phosphate and glycerone phosphate from D-glucose: step 4/4. Catalyzes the aldol condensation of dihydroxyacetone phosphate (DHAP or glycerone-phosphate) with glyceraldehyde 3-phosphate (G3P) to form fructose 1,6-bisphosphate (FBP) in gluconeogenesis and the reverse reaction in glycolysis. This is Fructose-bisphosphate aldolase (fba) from Borreliella burgdorferi (strain ATCC 35210 / DSM 4680 / CIP 102532 / B31) (Borrelia burgdorferi).